The sequence spans 84 residues: Small ribosomal subunit protein uS17 (84 aa).

This sequence belongs to the universal ribosomal protein uS17 family. As to quaternary structure, part of the 30S ribosomal subunit.

Functionally, one of the primary rRNA binding proteins, it binds specifically to the 5'-end of 16S ribosomal RNA. This is Small ribosomal subunit protein uS17 from Porphyromonas gingivalis (strain ATCC 33277 / DSM 20709 / CIP 103683 / JCM 12257 / NCTC 11834 / 2561).